Here is a 556-residue protein sequence, read N- to C-terminus: Glutamine--tRNA ligase (556 aa).

The short motif at 34-44 (PEPNGYLHIGH) is the 'HIGH' region element. Residues 35–37 (EPN) and 41–47 (HIGHAKS) each bind ATP. Residues aspartate 67 and tyrosine 212 each coordinate L-glutamine. ATP-binding positions include threonine 231, 261–262 (RL), and 269–271 (MSK). Residues 268 to 272 (VMSKR) carry the 'KMSKS' region motif.

The protein belongs to the class-I aminoacyl-tRNA synthetase family. As to quaternary structure, monomer.

Its subcellular location is the cytoplasm. It carries out the reaction tRNA(Gln) + L-glutamine + ATP = L-glutaminyl-tRNA(Gln) + AMP + diphosphate. The polypeptide is Glutamine--tRNA ligase (Vibrio vulnificus (strain YJ016)).